Reading from the N-terminus, the 527-residue chain is Peptide chain release factor 3 (527 aa).

One can recognise a tr-type G domain in the interval 9 to 277 (AKRRTFAIIS…CIVDWAPQPL (269 aa)). GTP contacts are provided by residues 18-25 (SHPDAGKT), 86-90 (DTPGH), and 140-143 (NKLD).

This sequence belongs to the TRAFAC class translation factor GTPase superfamily. Classic translation factor GTPase family. PrfC subfamily.

It localises to the cytoplasm. Increases the formation of ribosomal termination complexes and stimulates activities of RF-1 and RF-2. It binds guanine nucleotides and has strong preference for UGA stop codons. It may interact directly with the ribosome. The stimulation of RF-1 and RF-2 is significantly reduced by GTP and GDP, but not by GMP. The chain is Peptide chain release factor 3 from Pseudomonas aeruginosa (strain LESB58).